The following is a 129-amino-acid chain: UPF0325 protein ESA_03178 (129 aa).

It belongs to the UPF0325 family.

In Cronobacter sakazakii (strain ATCC BAA-894) (Enterobacter sakazakii), this protein is UPF0325 protein ESA_03178.